The sequence spans 412 residues: Na(+)/H(+) antiporter NhaA 1 (412 aa).

10 consecutive transmembrane segments (helical) span residues 34-54, 75-95, 114-134, 142-162, 183-203, 234-254, 282-302, 309-329, 349-369, and 379-399; these read VGGMVLLAAAALALVLANSPA, LTIGEWAKDGLLAIFFFVAGL, LPVVAALGGMVVPAVLAFAIG, AAWAIPVATDIAFALGVLSLT, LGAIVVIAVLFTSGLSVLALL, WIAVHSSGIHATIAGVALGLL, LIVPVFALFAAGVPVDGEALV, VAIAVVVGLVVGKLVGIFGSS, LSALAMLGGVGFTVSLLIAEL, and AKAAVLIASALASLLAAVMLL.

Belongs to the NhaA Na(+)/H(+) (TC 2.A.33) antiporter family.

It is found in the cell membrane. The enzyme catalyses Na(+)(in) + 2 H(+)(out) = Na(+)(out) + 2 H(+)(in). Functionally, na(+)/H(+) antiporter that extrudes sodium in exchange for external protons. The sequence is that of Na(+)/H(+) antiporter NhaA 1 from Saccharopolyspora erythraea (strain ATCC 11635 / DSM 40517 / JCM 4748 / NBRC 13426 / NCIMB 8594 / NRRL 2338).